Consider the following 332-residue polypeptide: MSKLPLLPTTVIGSYPRPKWLRESIRLHKAGKISDEDLQEAFNDAVIAVLKDHYNAGVDVPTDGEVRRDEMVEFFAERIKGFKFYGPVRVWGTAYYRKPSVVSKIEYKKPMLVDEFTFAKSVSYTDNLKITITGPYTIAEWSYNEYYKNKKDLVFDLAKAINQEIKNLVEAGAKIIQIDEPALHTRREDVSWGVEAVNEAVKGVNAKLVMHICYGEYSFVAPYLNELKVDQINFAFKIYNYKPLELLKRYGFDKELGAGVIDVHNRRIETSEEVANDIRKILEYFTPEKVWINPDCGLKLLSRKIAYQKLVSMVEGTKVVREELKRKGYSVD.

The Zn(2+) site is built by histidine 211, cysteine 213, and cysteine 296.

This sequence belongs to the archaeal MetE family. Requires Zn(2+) as cofactor.

It functions in the pathway amino-acid biosynthesis; L-methionine biosynthesis via de novo pathway. In terms of biological role, catalyzes the transfer of a methyl group to L-homocysteine resulting in methionine formation. The physiological methyl donor is unknown. The chain is Methionine synthase from Saccharolobus islandicus (strain L.S.2.15 / Lassen #1) (Sulfolobus islandicus).